The following is a 1413-amino-acid chain: Zinc finger protein 609 (1413 aa).

Disordered regions lie at residues M1–E26, Q47–S196, R354–L484, A517–A659, and P695–D765. 3 positions are modified to phosphoserine: S358, S361, and S379. A Phosphothreonine modification is found at T381. The span at A386 to A405 shows a compositional bias: low complexity. Phosphoserine occurs at positions 413, 433, 446, 452, 467, and 470. The segment covering A423–A437 has biased composition (polar residues). K479 participates in a covalent cross-link: Glycyl lysine isopeptide (Lys-Gly) (interchain with G-Cter in SUMO2). Residues I495 to H520 form a C2H2-type zinc finger. Over residues A519–A529 the composition is skewed to basic and acidic residues. 3 positions are modified to phosphoserine: S533, S575, and S577. A compositionally biased stretch (basic and acidic residues) spans S625 to P648. Residues D725–D735 show a composition bias toward basic residues. Position 742 is a phosphoserine (S742). Phosphothreonine is present on T745. Residues C750–A763 show a composition bias toward basic and acidic residues. The residue at position 757 (S757) is a Phosphoserine. K788 participates in a covalent cross-link: Glycyl lysine isopeptide (Lys-Gly) (interchain with G-Cter in SUMO2). The segment covering F797–A843 has biased composition (polar residues). 4 disordered regions span residues F797 to Q962, Y1004 to E1127, I1154 to T1221, and S1273 to H1369. The residue at position 803 (S803) is a Phosphoserine. T822 bears the Phosphothreonine mark. Phosphoserine is present on residues S841, S845, and S848. A compositionally biased stretch (basic and acidic residues) spans G854 to K875. A compositionally biased stretch (polar residues) spans Y902–A916. Positions T925 to E949 are enriched in basic and acidic residues. Positions L950–Q962 are enriched in polar residues. The span at G1022 to Q1044 shows a compositional bias: basic and acidic residues. S1057 is modified (phosphoserine). K1063 is covalently cross-linked (Glycyl lysine isopeptide (Lys-Gly) (interchain with G-Cter in SUMO2)). Basic and acidic residues-rich tracts occupy residues L1099–E1115, I1154–T1189, and P1197–P1210. K1155 is covalently cross-linked (Glycyl lysine isopeptide (Lys-Gly) (interchain with G-Cter in SUMO2)). The segment covering P1288–S1298 has biased composition (polar residues). K1299 participates in a covalent cross-link: Glycyl lysine isopeptide (Lys-Gly) (interchain with G-Cter in SUMO2). The span at G1330–G1348 shows a compositional bias: gly residues.

Interacts (via N-terminus) with NIPBL. Interacts with the multiprotein complex Integrator. In terms of tissue distribution, expressed in myoblasts. Expressed in neurons in various brain regions, including striatum, prefrontal cortex, olfactory bulb, midbrain, cerebellum and hippocampus. Expressed in neural stem cells (at protein level). Expressed in thymocytes.

It is found in the nucleus. Transcription factor, which activates RAG1, and possibly RAG2, transcription. Through the regulation of RAG1/2 expression, may regulate thymocyte maturation. Along with NIPBL and the multiprotein complex Integrator, promotes cortical neuron migration during brain development by regulating the transcription of crucial genes in this process. Preferentially binds promoters containing paused RNA polymerase II. Up-regulates the expression of SEMA3A, NRP1, PLXND1 and GABBR2 genes, among others. Functionally, involved in regulation of myoblast proliferation during myogenesis. The polypeptide is Zinc finger protein 609 (Znf609) (Mus musculus (Mouse)).